The sequence spans 106 residues: Protein S40-3 (106 aa).

The interval 1–65 is disordered; the sequence is MSEEFQESEV…TEEEGEMTPP (65 aa). Residues 16–41 show a composition bias toward basic and acidic residues; sequence SFTRKDNKISHNNENYERKSTEKDKI.

The protein belongs to the senescence regulator S40 family.

Its subcellular location is the nucleus. In terms of biological role, regulates senescence either by modulating WRKY53 or by activating SAG12. Affects the natural variation of cyst nematodes sex ratio and susceptibility to parasitic nematodes, depending on single nucleotide polymorphism (SNPs) between cultivars. In Arabidopsis thaliana (Mouse-ear cress), this protein is Protein S40-3.